The primary structure comprises 565 residues: Dihydroxy-acid dehydratase (565 aa).

Residue aspartate 80 coordinates Mg(2+). Cysteine 121 is a [2Fe-2S] cluster binding site. Aspartate 122 and lysine 123 together coordinate Mg(2+). Lysine 123 carries the post-translational modification N6-carboxylysine. Cysteine 194 contributes to the [2Fe-2S] cluster binding site. Glutamate 447 contacts Mg(2+). Serine 473 serves as the catalytic Proton acceptor.

This sequence belongs to the IlvD/Edd family. In terms of assembly, homodimer. [2Fe-2S] cluster is required as a cofactor. The cofactor is Mg(2+).

It carries out the reaction (2R)-2,3-dihydroxy-3-methylbutanoate = 3-methyl-2-oxobutanoate + H2O. The enzyme catalyses (2R,3R)-2,3-dihydroxy-3-methylpentanoate = (S)-3-methyl-2-oxopentanoate + H2O. It functions in the pathway amino-acid biosynthesis; L-isoleucine biosynthesis; L-isoleucine from 2-oxobutanoate: step 3/4. Its pathway is amino-acid biosynthesis; L-valine biosynthesis; L-valine from pyruvate: step 3/4. Functions in the biosynthesis of branched-chain amino acids. Catalyzes the dehydration of (2R,3R)-2,3-dihydroxy-3-methylpentanoate (2,3-dihydroxy-3-methylvalerate) into 2-oxo-3-methylpentanoate (2-oxo-3-methylvalerate) and of (2R)-2,3-dihydroxy-3-methylbutanoate (2,3-dihydroxyisovalerate) into 2-oxo-3-methylbutanoate (2-oxoisovalerate), the penultimate precursor to L-isoleucine and L-valine, respectively. The polypeptide is Dihydroxy-acid dehydratase (Chlorobium phaeovibrioides (strain DSM 265 / 1930) (Prosthecochloris vibrioformis (strain DSM 265))).